Reading from the N-terminus, the 201-residue chain is ATP-dependent Clp protease proteolytic subunit 2 (201 aa).

Residue Ser-100 is the Nucleophile of the active site. The active site involves His-125.

Belongs to the peptidase S14 family. As to quaternary structure, fourteen ClpP subunits assemble into 2 heptameric rings which stack back to back to give a disk-like structure with a central cavity, resembling the structure of eukaryotic proteasomes.

It is found in the cytoplasm. It catalyses the reaction Hydrolysis of proteins to small peptides in the presence of ATP and magnesium. alpha-casein is the usual test substrate. In the absence of ATP, only oligopeptides shorter than five residues are hydrolyzed (such as succinyl-Leu-Tyr-|-NHMec, and Leu-Tyr-Leu-|-Tyr-Trp, in which cleavage of the -Tyr-|-Leu- and -Tyr-|-Trp bonds also occurs).. Its function is as follows. Cleaves peptides in various proteins in a process that requires ATP hydrolysis. Has a chymotrypsin-like activity. Plays a major role in the degradation of misfolded proteins. The polypeptide is ATP-dependent Clp protease proteolytic subunit 2 (Corynebacterium glutamicum (strain ATCC 13032 / DSM 20300 / JCM 1318 / BCRC 11384 / CCUG 27702 / LMG 3730 / NBRC 12168 / NCIMB 10025 / NRRL B-2784 / 534)).